Reading from the N-terminus, the 86-residue chain is ATP synthase epsilon chain (86 aa).

It belongs to the ATPase epsilon chain family. In terms of assembly, F-type ATPases have 2 components, CF(1) - the catalytic core - and CF(0) - the membrane proton channel. CF(1) has five subunits: alpha(3), beta(3), gamma(1), delta(1), epsilon(1). CF(0) has three main subunits: a, b and c.

Its subcellular location is the cell inner membrane. Functionally, produces ATP from ADP in the presence of a proton gradient across the membrane. The polypeptide is ATP synthase epsilon chain (atpC) (Caulobacter vibrioides (strain ATCC 19089 / CIP 103742 / CB 15) (Caulobacter crescentus)).